The primary structure comprises 660 residues: Arginine--tRNA ligase, cytoplasmic (660 aa).

Residues 1 to 72 form a could be involved in the assembly of the multisynthetase complex region; the sequence is MELPVCFYEE…LEEKKKSSKS (72 aa). L-arginine contacts are provided by residues 200-202, His211, Tyr384, Asp388, and Gln412; that span reads SPN. The 'HIGH' region signature appears at 201-212; the sequence is PNIAKEMHVGHL. The segment at 529–543 is interaction with tRNA; the sequence is NTAAYLLYAYTRIRS.

The protein belongs to the class-I aminoacyl-tRNA synthetase family. In terms of assembly, monomer; also part of a multisubunit complex that groups tRNA ligases for Arg, Asp, Glu, Gln, Ile, Leu, Lys, Met and Pro.

It is found in the cytoplasm. It localises to the cytosol. It catalyses the reaction tRNA(Arg) + L-arginine + ATP = L-arginyl-tRNA(Arg) + AMP + diphosphate. Functionally, forms part of a macromolecular complex that catalyzes the attachment of specific amino acids to cognate tRNAs during protein synthesis. The chain is Arginine--tRNA ligase, cytoplasmic (rars1) from Xenopus tropicalis (Western clawed frog).